The chain runs to 541 residues: Chaperonin GroEL (541 aa).

Residues 29–32 (TLGP), 86–90 (DGTTT), glycine 413, 476–478 (NAA), and aspartate 492 contribute to the ATP site.

This sequence belongs to the chaperonin (HSP60) family. As to quaternary structure, forms a cylinder of 14 subunits composed of two heptameric rings stacked back-to-back. Interacts with the co-chaperonin GroES.

Its subcellular location is the cytoplasm. It carries out the reaction ATP + H2O + a folded polypeptide = ADP + phosphate + an unfolded polypeptide.. Its function is as follows. Together with its co-chaperonin GroES, plays an essential role in assisting protein folding. The GroEL-GroES system forms a nano-cage that allows encapsulation of the non-native substrate proteins and provides a physical environment optimized to promote and accelerate protein folding. In Streptococcus equi subsp. zooepidemicus (strain H70), this protein is Chaperonin GroEL.